The primary structure comprises 210 residues: Fibrillarin-like rRNA/tRNA 2'-O-methyltransferase (210 aa).

Residues 72–73 (TT), 88–89 (EF), 113–114 (DA), and 134–137 (DVAT) contribute to the S-adenosyl-L-methionine site.

The protein belongs to the methyltransferase superfamily. Fibrillarin family. In terms of assembly, interacts with nop5. Component of box C/D small ribonucleoprotein (sRNP) particles that contain rpl7ae, FlpA and nop5, plus a guide RNA.

In terms of biological role, involved in pre-rRNA and tRNA processing. Utilizes the methyl donor S-adenosyl-L-methionine to catalyze the site-specific 2'-hydroxyl methylation of ribose moieties in rRNA and tRNA. Site specificity is provided by a guide RNA that base pairs with the substrate. Methylation occurs at a characteristic distance from the sequence involved in base pairing with the guide RNA. In Halobacterium salinarum (strain ATCC 29341 / DSM 671 / R1), this protein is Fibrillarin-like rRNA/tRNA 2'-O-methyltransferase.